The chain runs to 471 residues: 3-isopropylmalate dehydratase large subunit (471 aa).

[4Fe-4S] cluster is bound by residues Cys-351, Cys-412, and Cys-415.

This sequence belongs to the aconitase/IPM isomerase family. LeuC type 1 subfamily. In terms of assembly, heterodimer of LeuC and LeuD. [4Fe-4S] cluster is required as a cofactor.

The catalysed reaction is (2R,3S)-3-isopropylmalate = (2S)-2-isopropylmalate. Its pathway is amino-acid biosynthesis; L-leucine biosynthesis; L-leucine from 3-methyl-2-oxobutanoate: step 2/4. Functionally, catalyzes the isomerization between 2-isopropylmalate and 3-isopropylmalate, via the formation of 2-isopropylmaleate. This chain is 3-isopropylmalate dehydratase large subunit, found in Hahella chejuensis (strain KCTC 2396).